The chain runs to 144 residues: Snaclec trimecetin subunit beta (144 aa).

An N-terminal signal peptide occupies residues methionine 1–alanine 23. 3 cysteine pairs are disulfide-bonded: cysteine 25–cysteine 36, cysteine 53–cysteine 142, and cysteine 119–cysteine 134. One can recognise a C-type lectin domain in the interval phenylalanine 32 to lysine 143.

This sequence belongs to the snaclec family. Heterodimer of subunits alpha and beta; disulfide-linked. As to expression, expressed by the venom gland.

The protein localises to the secreted. Functionally, snaclec that induces platelet aggregation in either human platelet rich plasma (PRP) or washed platelet suspensions. It causes aggregation in a dose-dependent manner even in the absence of various platelet agonists such as ADP or von Willebrand factor (vWF). Interestingly, it does not induce aggregation in rabbit PRP. A monoclonal antibody against the platelet GPIb receptor blocks the aggregation induced by trimecetin, suggesting that it acts by binding to GPIb (GP1BA/GP1BB). The chain is Snaclec trimecetin subunit beta from Protobothrops mucrosquamatus (Taiwan habu).